A 133-amino-acid polypeptide reads, in one-letter code: Protein msa (133 aa).

4 consecutive transmembrane segments (helical) span residues 3 to 23 (YLIL…AIGL), 27 to 47 (ILAA…ILFF), 55 to 75 (YIFF…VHLM), and 103 to 123 (FGFD…IILY).

The protein localises to the cell membrane. Functionally, accessory element involved in the expression of sarA and several virulence factors. Modulates SarA production and/or function in a strain-dependent manner. Affects the transcription of the accessory gene regulator (agr) and genes encoding virulence factors including alpha toxin (hla) and protein A (spa). The chain is Protein msa (msa) from Staphylococcus aureus (strain bovine RF122 / ET3-1).